A 425-amino-acid chain; its full sequence is Serine--tRNA ligase (425 aa).

228-230 provides a ligand contact to L-serine; it reads TSE. An ATP-binding site is contributed by 259–261; the sequence is RSE. Residue Glu-282 coordinates L-serine. 346–349 is a binding site for ATP; the sequence is EISS. An L-serine-binding site is contributed by Ser-384.

The protein belongs to the class-II aminoacyl-tRNA synthetase family. Type-1 seryl-tRNA synthetase subfamily. As to quaternary structure, homodimer. The tRNA molecule binds across the dimer.

Its subcellular location is the cytoplasm. It carries out the reaction tRNA(Ser) + L-serine + ATP = L-seryl-tRNA(Ser) + AMP + diphosphate + H(+). The enzyme catalyses tRNA(Sec) + L-serine + ATP = L-seryl-tRNA(Sec) + AMP + diphosphate + H(+). It functions in the pathway aminoacyl-tRNA biosynthesis; selenocysteinyl-tRNA(Sec) biosynthesis; L-seryl-tRNA(Sec) from L-serine and tRNA(Sec): step 1/1. Its function is as follows. Catalyzes the attachment of serine to tRNA(Ser). Is also able to aminoacylate tRNA(Sec) with serine, to form the misacylated tRNA L-seryl-tRNA(Sec), which will be further converted into selenocysteinyl-tRNA(Sec). In Ehrlichia ruminantium (strain Gardel), this protein is Serine--tRNA ligase.